The sequence spans 170 residues: Adenine phosphoribosyltransferase (170 aa).

This sequence belongs to the purine/pyrimidine phosphoribosyltransferase family. Homodimer.

The protein resides in the cytoplasm. It catalyses the reaction AMP + diphosphate = 5-phospho-alpha-D-ribose 1-diphosphate + adenine. The protein operates within purine metabolism; AMP biosynthesis via salvage pathway; AMP from adenine: step 1/1. In terms of biological role, catalyzes a salvage reaction resulting in the formation of AMP, that is energically less costly than de novo synthesis. The chain is Adenine phosphoribosyltransferase from Bacillus subtilis (strain 168).